The chain runs to 346 residues: Methionine import ATP-binding protein MetN 1 (346 aa).

The region spanning 2 to 241 is the ABC transporter domain; the sequence is IEFKQVTKTF…PQHPTTEKFV (240 aa). 38–45 contributes to the ATP binding site; sequence GFSGAGKS.

This sequence belongs to the ABC transporter superfamily. Methionine importer (TC 3.A.1.24) family. As to quaternary structure, the complex is composed of two ATP-binding proteins (MetN), two transmembrane proteins (MetI) and a solute-binding protein (MetQ).

The protein resides in the cell membrane. It carries out the reaction L-methionine(out) + ATP + H2O = L-methionine(in) + ADP + phosphate + H(+). The enzyme catalyses D-methionine(out) + ATP + H2O = D-methionine(in) + ADP + phosphate + H(+). Part of the ABC transporter complex MetNIQ involved in methionine import. Responsible for energy coupling to the transport system. In Shouchella clausii (strain KSM-K16) (Alkalihalobacillus clausii), this protein is Methionine import ATP-binding protein MetN 1.